Reading from the N-terminus, the 213-residue chain is Na(+)-translocating NADH-quinone reductase subunit D (213 aa).

6 consecutive transmembrane segments (helical) span residues 21–41, 42–62, 77–97, 101–121, 131–151, and 183–203; these read PLIA…VKTA, ITMG…VSLL, IIIS…FFNI, LSVF…AESL, FLDG…VSII, and FGLM…IWVV.

The protein belongs to the NqrDE/RnfAE family. As to quaternary structure, composed of six subunits; NqrA, NqrB, NqrC, NqrD, NqrE and NqrF.

The protein localises to the cell inner membrane. The catalysed reaction is a ubiquinone + n Na(+)(in) + NADH + H(+) = a ubiquinol + n Na(+)(out) + NAD(+). Functionally, NQR complex catalyzes the reduction of ubiquinone-1 to ubiquinol by two successive reactions, coupled with the transport of Na(+) ions from the cytoplasm to the periplasm. NqrA to NqrE are probably involved in the second step, the conversion of ubisemiquinone to ubiquinol. The chain is Na(+)-translocating NADH-quinone reductase subunit D from Chlamydia felis (strain Fe/C-56) (Chlamydophila felis).